Here is a 307-residue protein sequence, read N- to C-terminus: Homoserine O-acetyltransferase (307 aa).

The active-site Acyl-thioester intermediate is Cys142. Substrate is bound by residues Lys163 and Ser192. The Proton acceptor role is filled by His235. Glu237 is an active-site residue. Residue Arg249 participates in substrate binding.

Belongs to the MetA family.

The protein resides in the cytoplasm. It carries out the reaction L-homoserine + acetyl-CoA = O-acetyl-L-homoserine + CoA. It functions in the pathway amino-acid biosynthesis; L-methionine biosynthesis via de novo pathway; O-acetyl-L-homoserine from L-homoserine: step 1/1. Functionally, transfers an acetyl group from acetyl-CoA to L-homoserine, forming acetyl-L-homoserine. This is Homoserine O-acetyltransferase from Sinorhizobium fredii (strain NBRC 101917 / NGR234).